The sequence spans 735 residues: MPVADIEMVTGSAGHVDSKAASEYGTDLRRWRLKVHEGRHMWEYVDEDVAQTQQQTFAENYWLGQEYELPKMSTPIFAQDALDNGWAFFKRLQTQDGHWGCHDDGPLFVTSGIVISSYICGITLPDAMKNEMIRYLLNFVNEDGGWGLWINSPSTVFGTTMNYTMLRILGVPSTHPALLDARDTLLKMGSARALPTWGKFWMCALGAYEWDGMIPLAPEPLLAPGFLPLNPGNWWVHTRNVFVSMSYLFGHRFSAPMTPLIQELREELYDMPYHKIDWFAQQTNISDYDRLHPPTMLQKGLANALCYYEYVKVPYLRRKALDEALFQVEMEVHNTSYLCIAPVSFASNMLVMFHAHGANSHWVKGMADRIIDPMWMCREGMAASGTNGTSVWDTALTVQAALDGGLAQRPENHNTMLEALKFIEVSQITENPLGVSQGYRQPTKGAWPFSTRDQAYAVSDTTAVTVRAVIQLQALKSMPKLVSDERLAEAVDLIIGMENKCDGYSAFEPLRGPKALELLNITELYDNVMTESLYPECTSSVLLCLDTFTKAYPHHRPVEIQSIMARCARYLIKAQFPCGGWLASWGVCFTYATMFALQGLETVGLRESNSETCRNACSFLLQYQNDDGGWGEDLISIREKRYIQDPAGSQVTCTAYALMGLISAHCSNRDALRRGIRWLMRAQQATGEWLPGSLEGIFACPGGMRYPNYKFHFTLSAIGRYIERYGDEALYLKEQ.

A PFTB 1 repeat occupies lysine 129–glycine 170. The Proton donor role is filled by aspartate 460. PFTB repeat units lie at residues leucine 487–valine 528, methionine 564–glycine 604, and cysteine 613–glycine 660.

The protein belongs to the terpene cyclase/mutase family.

The catalysed reaction is (S)-2,3-epoxysqualene = (17Z)-protosta-17(20),24-dien-3beta-ol. In terms of biological role, protostadienol synthase which cyclizes (3S)-oxidosqualene to (17Z)-protosta-17(20),24-dien-3-beta-ol (protostadienol), the biosynthetic precursor of helvolic acid, a secondary metabolite which promotes virulence. This is Protostadienol synthase A (PDSA) from Arthroderma gypseum (strain ATCC MYA-4604 / CBS 118893) (Microsporum gypseum).